Here is a 1163-residue protein sequence, read N- to C-terminus: Genome polyprotein (1163 aa).

At 1–104 the chain is on the cytoplasmic side; it reads MSGRKAQGKT…LSSRKRRSYE (104 aa). A hydrophobic; homodimerization of capsid protein C region spans residues 38-72; sequence PGPSRGVQGFIFFFLFNVLTGRKITAHLKKLWRML. A propeptide spans 102 to 121 (ER anchor for the capsid protein C, removed in mature form by serine protease NS3); it reads SYEVLTVQFLILGMLLMTGG. The chain crosses the membrane as a helical span at residues 105–125; that stretch reads VLTVQFLILGMLLMTGGVTLV. Topologically, residues 126 to 244 are extracellular; it reads RKSRWLLLNV…GERQLQKIER (119 aa). 2 N-linked (GlcNAc...) asparagine; by host glycosylation sites follow: Asn-134 and Asn-150. The helical transmembrane segment at 245–265 threads the bilayer; that stretch reads WLVRNPFFAVTALAIAYLVGS. Residues 266–270 lie on the Cytoplasmic side of the membrane; it reads NMTQR. A helical transmembrane segment spans residues 271 to 285; sequence VVIALLVLAVGPAYS. Over 286–730 the chain is Extracellular; sequence AHCIGITDRD…MVFGSAFQGL (445 aa). Intrachain disulfides connect Cys-288–Cys-315, Cys-345–Cys-406, Cys-359–Cys-390, Cys-377–Cys-401, Cys-467–Cys-568, and Cys-585–Cys-615. Residues 383-396 are fusion peptide; it reads DRGWGNGCGLFGKG. Residues 731–751 form a helical membrane-spanning segment; that stretch reads FGGLSWITKVIMGAVLIWVGI. Residues 752–757 are Extracellular-facing; the sequence is NMRNMT. The chain crosses the membrane as a helical span at residues 758-778; that stretch reads MSMSMILVGVIMMFLSLGVGA. Topologically, residues 779 to 1163 are extracellular; the sequence is DQGCAINFGK…RQGPKQILVG (385 aa). Intrachain disulfides connect Cys-782–Cys-793, Cys-833–Cys-921, Cys-957–Cys-1002, Cys-1058–Cys-1107, Cys-1069–Cys-1091, and Cys-1090–Cys-1094. N-linked (GlcNAc...) asparagine; by host glycosylation is found at Asn-908 and Asn-986.

Homodimer. Interacts (via N-terminus) with host EXOC1 (via C-terminus); this interaction results in EXOC1 degradation through the proteasome degradation pathway. As to quaternary structure, forms heterodimers with envelope protein E in the endoplasmic reticulum and Golgi. In terms of assembly, homodimer; in the endoplasmic reticulum and Golgi. Homodimer; Homohexamer when secreted. Interacts with envelope protein E. Specific enzymatic cleavages in vivo yield mature proteins. The nascent capsid protein C contains a C-terminal hydrophobic domain that act as a signal sequence for translocation of prM into the lumen of the ER. Mature capsid protein C is cleaved at a site upstream of this hydrophobic domain by NS3. prM is cleaved in post-Golgi vesicles by a host furin, releasing the mature small envelope protein M, and peptide pr. Non-structural protein 2A-alpha, a C-terminally truncated form of non-structural protein 2A, results from partial cleavage by NS3. Specific enzymatic cleavages in vivo yield mature proteins peptide 2K acts as a signal sequence and is removed from the N-terminus of NS4B by the host signal peptidase in the ER lumen. Signal cleavage at the 2K-4B site requires a prior NS3 protease-mediated cleavage at the 4A-2K site. Post-translationally, cleaved in post-Golgi vesicles by a host furin, releasing the mature small envelope protein M, and peptide pr. This cleavage is incomplete as up to 30% of viral particles still carry uncleaved prM. In terms of processing, N-glycosylated. N-glycosylated. The excreted form is glycosylated and this is required for efficient secretion of the protein from infected cells.

Its subcellular location is the virion. The protein resides in the host nucleus. It is found in the host cytoplasm. It localises to the host perinuclear region. The protein localises to the secreted. Its subcellular location is the virion membrane. The protein resides in the host endoplasmic reticulum membrane. In terms of biological role, plays a role in virus budding by binding to the cell membrane and gathering the viral RNA into a nucleocapsid that forms the core of a mature virus particle. During virus entry, may induce genome penetration into the host cytoplasm after hemifusion induced by the surface proteins. Can migrate to the cell nucleus where it modulates host functions. Functionally, inhibits RNA silencing by interfering with host Dicer. Its function is as follows. Prevents premature fusion activity of envelope proteins in trans-Golgi by binding to envelope protein E at pH6.0. After virion release in extracellular space, gets dissociated from E dimers. Acts as a chaperone for envelope protein E during intracellular virion assembly by masking and inactivating envelope protein E fusion peptide. prM is the only viral peptide matured by host furin in the trans-Golgi network probably to avoid catastrophic activation of the viral fusion activity in acidic Golgi compartment prior to virion release. prM-E cleavage is inefficient, and many virions are only partially matured. These uncleaved prM would play a role in immune evasion. In terms of biological role, may play a role in virus budding. Exerts cytotoxic effects by activating a mitochondrial apoptotic pathway through M ectodomain. May display a viroporin activity. Functionally, binds to host cell surface receptor and mediates fusion between viral and cellular membranes. Envelope protein is synthesized in the endoplasmic reticulum in the form of heterodimer with protein prM. They play a role in virion budding in the ER, and the newly formed immature particle is covered with 60 spikes composed of heterodimer between precursor prM and envelope protein E. The virion is transported to the Golgi apparatus where the low pH causes dissociation of PrM-E heterodimers and formation of E homodimers. prM-E cleavage is inefficient, and many virions are only partially matured. These uncleaved prM would play a role in immune evasion. Its function is as follows. Involved in immune evasion, pathogenesis and viral replication. Once cleaved off the polyprotein, is targeted to three destinations: the viral replication cycle, the plasma membrane and the extracellular compartment. Essential for viral replication. Required for formation of the replication complex and recruitment of other non-structural proteins to the ER-derived membrane structures. Excreted as a hexameric lipoparticle that plays a role against host immune response. Antagonizing the complement function. Binds to the host macrophages and dendritic cells. Inhibits signal transduction originating from Toll-like receptor 3 (TLR3). Component of the viral RNA replication complex that functions in virion assembly and antagonizes the host immune response. This is Genome polyprotein from Aedes aegypti (Yellowfever mosquito).